A 1905-amino-acid chain; its full sequence is Microtubule cross-linking factor 1 (1905 aa).

The tract at residues 1 to 249 (METLNGPAGG…SSDREPPRGA (249 aa)) is necessary for colocalization and binding with microtubules. The disordered stretch occupies residues 1–329 (METLNGPAGG…SLGEQSRLVP (329 aa)). Residues 1–508 (METLNGPAGG…QDDSADLRCQ (508 aa)) form a necessary for self-assembly, microtubule bundling activity and apicobasal microtubule organization region. Residues 22–40 (QHHRHHHLHPVAERRRLHR) are compositionally biased toward basic residues. Low complexity-rich tracts occupy residues 63–95 (VPSS…AAPG) and 115–130 (AGAR…LGSR). 2 positions are modified to phosphoserine: Ser77 and Ser87. A phosphoserine mark is found at Ser217, Ser221, and Ser263. Positions 268–283 (ALLAAPLAAGACPGGR) are enriched in low complexity. Coiled coils occupy residues 330–404 (AAEE…EQKS), 432–483 (SVRL…SSLK), and 513–718 (KEEA…LQHE). Disordered stretches follow at residues 544–563 (YGDV…PSTR), 601–631 (DMRG…LESS), 671–694 (FEPP…GAPL), 737–800 (LRAP…SEPC), and 842–867 (AGLR…GDQQ). Ser549 bears the Phosphoserine mark. Residues 601–616 (DMRGQQEREGPGRDHA) are compositionally biased toward basic and acidic residues. At Ser618 the chain carries Phosphoserine. Thr621 is modified (phosphothreonine). Gly residues predominate over residues 680 to 692 (LGEGASPGAGGGA). Ser685 is modified (phosphoserine). The span at 741–770 (SPRDSDAESDAGKKESDGEESRLPQPKREG) shows a compositional bias: basic and acidic residues. Ser776 is subject to Phosphoserine. Over residues 857–866 (GEEEQGEGDQ) the composition is skewed to acidic residues. Ser901, Ser923, Lys941, and Thr975 each carry phosphoserine. The disordered stretch occupies residues 1080–1100 (GVQGGHQADGPDHDSDRGCGF). 2 coiled-coil regions span residues 1143 to 1201 (KALL…ELGS) and 1238 to 1278 (EKNW…KENS). A necessary for interaction with MARK2 and apicobasal microtubule bundle formation in polarized epithelial cells region spans residues 1265–1382 (EFLWRIEQLQ…EENHKGNLQR (118 aa)). Ser1278 is modified (phosphoserine). A disordered region spans residues 1346–1384 (ALSLDDEPEEPPAHRPEREFRNRLPEEEENHKGNLQRAV). A compositionally biased stretch (basic and acidic residues) spans 1356–1377 (PPAHRPEREFRNRLPEEEENHK). Phosphoserine occurs at positions 1385, 1388, and 1399. Phosphothreonine is present on Thr1417. Ser1421 is modified (phosphoserine). At Tyr1427 the chain carries Phosphotyrosine. The disordered stretch occupies residues 1485–1505 (DTMTSPEHCQKQPLRSHVLTE). Residues Ser1514, Ser1523, Ser1561, Ser1578, Ser1583, Ser1592, and Ser1661 each carry the phosphoserine modification. Residues 1524 to 1569 (ITAAGGEGPFPTSRARGSPGDTKGGPPEPMLSRWPCTSPRHSRDYV) form a disordered region. 4 disordered regions span residues 1655 to 1689 (GSGV…SRQV), 1707 to 1756 (PKYG…PVHT), 1782 to 1842 (GLRA…APPG), and 1863 to 1905 (KEER…PWGL). A phosphothreonine mark is found at Thr1667 and Thr1675. A compositionally biased stretch (low complexity) spans 1678–1687 (SSPSRSLRSR). A necessary for colocalization and binding with microtubules region spans residues 1678–1773 (SSPSRSLRSR…SLFNIIDHSP (96 aa)). Residues Ser1679 and Ser1683 each carry the phosphoserine modification. Over residues 1744–1756 (ARSTTTRESPVHT) the composition is skewed to polar residues. Phosphoserine occurs at positions 1791, 1808, 1812, and 1814.

Belongs to the SOGA family. Homodimer. Associates (via N- and C-terminus domains) with microtubule filaments. As to quaternary structure, interacts with MARK2; the interaction is direct. Phosphorylated during mitosis in a CDK1-dependent manner.

The protein localises to the lateral cell membrane. Its subcellular location is the apical cell membrane. The protein resides in the cytoplasm. It is found in the cytoskeleton. It localises to the spindle pole. The protein localises to the midbody. Microtubule-associated factor involved in the late phase of epithelial polarization and microtubule dynamics regulation. Plays a role in the development and maintenance of non-centrosomal microtubule bundles at the lateral membrane in polarized epithelial cells. Required for faithful chromosome segregation during mitosis. The protein is Microtubule cross-linking factor 1 (MTCL1) of Homo sapiens (Human).